The primary structure comprises 689 residues: Glycine--tRNA ligase beta subunit (689 aa).

This sequence belongs to the class-II aminoacyl-tRNA synthetase family. In terms of assembly, tetramer of two alpha and two beta subunits.

It localises to the cytoplasm. The catalysed reaction is tRNA(Gly) + glycine + ATP = glycyl-tRNA(Gly) + AMP + diphosphate. In Salmonella paratyphi C (strain RKS4594), this protein is Glycine--tRNA ligase beta subunit.